Here is a 445-residue protein sequence, read N- to C-terminus: MDEQGRLMQARGVGIPGLPIHGGPQTLTPHPMHEPPTDNGEPRKQDIGDILQQIMTITDQSLDEAQAKKHALNCHRMKPALFSVLCEIKEKTGLSIRNSQEEEPVDPQLMRLDNMLLAEGVAGPEKGGGSAAAAAAAAASGGVSPDNSIEHSDYRNKLSQIRQIYHAELEKYEQACNEFTTHVMNLLREQSRTRPISPKEIERMVGIIHRKFSSIQMQLKQSTCEAVMILRSRFLDARRKRRNFSKQATEVLNEYFYSHLSNPYPSEEAKEELAKKCSITVSQVSNWFGNKRIRYKKNIGKFQEEANIYAVKTAVSVTQGGHSGANSPTTPTSAGSGGSFNLSGSNDMFMAMQGFRCTARGRSGQMEGGKKLSPLRLSPRPQKDLAVSTLTPRTELFILCAPSVYQTRLFTWTKPLPRLTPILWNYQGEGLWKSTLPLPPSLPSN.

The segment at 13–44 is disordered; sequence VGIPGLPIHGGPQTLTPHPMHEPPTDNGEPRK. The span at 31 to 44 shows a compositional bias: basic and acidic residues; it reads PMHEPPTDNGEPRK. Residues 42–236 enclose the PBC domain; it reads PRKQDIGDIL…VMILRSRFLD (195 aa). The segment at 49-128 is PBC-A; that stretch reads DILQQIMTIT…EGVAGPEKGG (80 aa). Residues 131–236 form a PBC-B region; the sequence is AAAAAAAAAS…VMILRSRFLD (106 aa). Residues 237–299 constitute a DNA-binding region (homeobox; TALE-type); it reads ARRKRRNFSK…NKRIRYKKNI (63 aa). Polar residues predominate over residues 319 to 332; that stretch reads QGGHSGANSPTTPT. Residues 319–338 form a disordered region; that stretch reads QGGHSGANSPTTPTSAGSGG.

This sequence belongs to the TALE/PBX homeobox family.

Its subcellular location is the nucleus. Transcriptional activator that binds the sequence 5'-ATCAATCAA-3'. This is Pre-B-cell leukemia transcription factor 2 (pbx2) from Xenopus laevis (African clawed frog).